The sequence spans 248 residues: Probable transcriptional regulatory protein RPC_4807 (248 aa).

The tract at residues 1-21 is disordered; it reads MAGHSQFKNIMHRKGRQDAQK.

Belongs to the TACO1 family.

It localises to the cytoplasm. In Rhodopseudomonas palustris (strain BisB18), this protein is Probable transcriptional regulatory protein RPC_4807.